The sequence spans 254 residues: Probable derlin-2 homolog (254 aa).

Over 1–17 (MAQPFEDWYKNLPIVTK) the chain is Cytoplasmic. A helical membrane pass occupies residues 18–38 (IYMTGCVVTSVSVYLGLVGPL). Over 39–95 (RLYLNFPLVFGKYEFWRLFTNFFFYDEIGMNFFFHMYFLVRHSRLLEESSFRGRSAD) the chain is Lumenal. Residues 96-116 (YLFMWIFGSFLLLIMDAFLFY) traverse the membrane as a helical segment. The Cytoplasmic portion of the chain corresponds to 117 to 118 (TK). A helical membrane pass occupies residues 119–139 (IVTKVLFLAPSIAFMVIYVWS). Residues 140-146 (RRNPNMH) are Lumenal-facing. A helical membrane pass occupies residues 147–167 (ISFLGLFTFSAPYLPWVILIM). The Cytoplasmic segment spans residues 168–254 (GYLFNHDLTT…FLNEDDLDQQ (87 aa)).

It belongs to the derlin family.

It localises to the endoplasmic reticulum membrane. Its function is as follows. May be involved in the degradation process of specific misfolded endoplasmic reticulum (ER) luminal proteins. May also be involved in endoplasmic reticulum stress-induced pre-emptive quality control, a mechanism that selectively attenuates the translocation of newly synthesized proteins into the endoplasmic reticulum and reroutes them to the cytosol for proteasomal degradation. The polypeptide is Probable derlin-2 homolog (derl2) (Dictyostelium discoideum (Social amoeba)).